A 282-amino-acid polypeptide reads, in one-letter code: Pantothenate synthetase (282 aa).

Position 30–37 (30–37) interacts with ATP; the sequence is MGYLHEGH. The active-site Proton donor is His37. Position 61 (Gln61) interacts with (R)-pantoate. Gln61 lines the beta-alanine pocket. 147-150 is an ATP binding site; sequence GMKD. Gln153 is a binding site for (R)-pantoate. ATP is bound by residues Val176 and 184-187; that span reads KSSR.

It belongs to the pantothenate synthetase family. Homodimer.

It is found in the cytoplasm. The catalysed reaction is (R)-pantoate + beta-alanine + ATP = (R)-pantothenate + AMP + diphosphate + H(+). The protein operates within cofactor biosynthesis; (R)-pantothenate biosynthesis; (R)-pantothenate from (R)-pantoate and beta-alanine: step 1/1. Its function is as follows. Catalyzes the condensation of pantoate with beta-alanine in an ATP-dependent reaction via a pantoyl-adenylate intermediate. In Bacillus cereus (strain ATCC 14579 / DSM 31 / CCUG 7414 / JCM 2152 / NBRC 15305 / NCIMB 9373 / NCTC 2599 / NRRL B-3711), this protein is Pantothenate synthetase.